Reading from the N-terminus, the 154-residue chain is MNFEGKLIGKELKVVIVVSRFNDFITGRLLEGAKDTLIRHDVNEDNIDVAFVPGAFEIPLVAKKLASSGNYDAVITLGCVIRGATSHFDYVCNEVAKGVSKVNDQTNVPVIFGILTTESIEQAVERAGTKAGNKGAEAAVSAIEMANLLKSIKA.

5-amino-6-(D-ribitylamino)uracil contacts are provided by residues F21, 55-57 (AFE), and 79-81 (CVI). 84 to 85 (AT) is a (2S)-2-hydroxy-3-oxobutyl phosphate binding site. Catalysis depends on H87, which acts as the Proton donor. A 5-amino-6-(D-ribitylamino)uracil-binding site is contributed by F112. R126 is a (2S)-2-hydroxy-3-oxobutyl phosphate binding site.

This sequence belongs to the DMRL synthase family. In terms of assembly, forms an icosahedral capsid composed of 60 subunits, arranged as a dodecamer of pentamers.

It catalyses the reaction (2S)-2-hydroxy-3-oxobutyl phosphate + 5-amino-6-(D-ribitylamino)uracil = 6,7-dimethyl-8-(1-D-ribityl)lumazine + phosphate + 2 H2O + H(+). The protein operates within cofactor biosynthesis; riboflavin biosynthesis; riboflavin from 2-hydroxy-3-oxobutyl phosphate and 5-amino-6-(D-ribitylamino)uracil: step 1/2. Its function is as follows. Catalyzes the formation of 6,7-dimethyl-8-ribityllumazine by condensation of 5-amino-6-(D-ribitylamino)uracil with 3,4-dihydroxy-2-butanone 4-phosphate. This is the penultimate step in the biosynthesis of riboflavin. The sequence is that of 6,7-dimethyl-8-ribityllumazine synthase from Staphylococcus aureus (strain MRSA252).